The chain runs to 1430 residues: DNA-directed RNA polymerase subunit beta' (1430 aa).

4 residues coordinate Zn(2+): cysteine 70, cysteine 72, cysteine 85, and cysteine 88. Mg(2+)-binding residues include aspartate 495, aspartate 497, and aspartate 499. The Zn(2+) site is built by cysteine 838, cysteine 912, cysteine 919, and cysteine 922.

This sequence belongs to the RNA polymerase beta' chain family. As to quaternary structure, the RNAP catalytic core consists of 2 alpha, 1 beta, 1 beta' and 1 omega subunit. When a sigma factor is associated with the core the holoenzyme is formed, which can initiate transcription. Mg(2+) is required as a cofactor. Requires Zn(2+) as cofactor.

The enzyme catalyses RNA(n) + a ribonucleoside 5'-triphosphate = RNA(n+1) + diphosphate. Functionally, DNA-dependent RNA polymerase catalyzes the transcription of DNA into RNA using the four ribonucleoside triphosphates as substrates. The polypeptide is DNA-directed RNA polymerase subunit beta' (Rhodospirillum centenum (strain ATCC 51521 / SW)).